The chain runs to 502 residues: Phenylacetaldehyde dehydrogenase (502 aa).

251–256 (GSTEVG) contacts NAD(+). Active-site residues include E273 and C307.

Belongs to the aldehyde dehydrogenase family.

The catalysed reaction is 2-phenylacetaldehyde + NAD(+) + H2O = 2-phenylacetate + NADH + 2 H(+). The protein operates within aromatic compound metabolism. Its function is as follows. Phenylacetaldehyde dehydrogenase that catalyzes the last step in the aerobic styrene degradation pathway by mediating oxidation of phenylacetaldehyde to phenylacetic acid. This chain is Phenylacetaldehyde dehydrogenase (styD), found in Pseudomonas fluorescens.